A 95-amino-acid chain; its full sequence is Cytochrome b-c1 complex subunit 8, mitochondrial (95 aa).

Residues 57 to 74 (FLYVAIPFVVVWSIWTRA) form a helical membrane-spanning segment.

The protein belongs to the UQCRQ/QCR8 family. Component of the ubiquinol-cytochrome c oxidoreductase (cytochrome b-c1 complex, complex III, CIII), a multisubunit enzyme composed of 10 subunits. The complex is composed of 3 respiratory subunits cytochrome b (COB), cytochrome c1 (CYT1) and Rieske protein (RIP1), 2 core protein subunits COR1 and QCR2, and 5 low-molecular weight protein subunits QCR6, QCR7, QCR8, QCR9 and QCR10. The complex exists as an obligatory dimer and forms supercomplexes (SCs) in the inner mitochondrial membrane with a monomer or a dimer of cytochrome c oxidase (complex IV, CIV), resulting in 2 different assemblies (supercomplexes III(2)IV and III(2)IV(2)).

The protein resides in the membrane. It is found in the mitochondrion inner membrane. Component of the ubiquinol-cytochrome c oxidoreductase, a multisubunit transmembrane complex that is part of the mitochondrial electron transport chain which drives oxidative phosphorylation. The complex plays an important role in the uptake of multiple carbon sources present in different host niches. In Candida albicans (strain SC5314 / ATCC MYA-2876) (Yeast), this protein is Cytochrome b-c1 complex subunit 8, mitochondrial.